A 334-amino-acid polypeptide reads, in one-letter code: Ribosomal RNA large subunit methyltransferase F (334 aa).

A disordered region spans residues 1–25 (MPRPSSPRPDAERKSASPLHPRNRH).

It belongs to the methyltransferase superfamily. METTL16/RlmF family.

Its subcellular location is the cytoplasm. It carries out the reaction adenosine(1618) in 23S rRNA + S-adenosyl-L-methionine = N(6)-methyladenosine(1618) in 23S rRNA + S-adenosyl-L-homocysteine + H(+). Functionally, specifically methylates the adenine in position 1618 of 23S rRNA. The protein is Ribosomal RNA large subunit methyltransferase F of Pseudomonas paraeruginosa (strain DSM 24068 / PA7) (Pseudomonas aeruginosa (strain PA7)).